A 371-amino-acid polypeptide reads, in one-letter code: Anhydro-N-acetylmuramic acid kinase (371 aa).

ATP is bound at residue Gly9–Asp16.

The protein belongs to the anhydro-N-acetylmuramic acid kinase family.

It catalyses the reaction 1,6-anhydro-N-acetyl-beta-muramate + ATP + H2O = N-acetyl-D-muramate 6-phosphate + ADP + H(+). It functions in the pathway amino-sugar metabolism; 1,6-anhydro-N-acetylmuramate degradation. It participates in cell wall biogenesis; peptidoglycan recycling. Its function is as follows. Catalyzes the specific phosphorylation of 1,6-anhydro-N-acetylmuramic acid (anhMurNAc) with the simultaneous cleavage of the 1,6-anhydro ring, generating MurNAc-6-P. Is required for the utilization of anhMurNAc either imported from the medium or derived from its own cell wall murein, and thus plays a role in cell wall recycling. The chain is Anhydro-N-acetylmuramic acid kinase from Azorhizobium caulinodans (strain ATCC 43989 / DSM 5975 / JCM 20966 / LMG 6465 / NBRC 14845 / NCIMB 13405 / ORS 571).